We begin with the raw amino-acid sequence, 464 residues long: RCC1-like G exchanging factor-like protein (464 aa).

A mitochondrion-targeting transit peptide spans 1–37; the sequence is MALVALVAGARLGRRLSGPGLGRGHWTAAGRSRSRRE. 7 RCC1 repeats span residues 58–124, 128–191, 193–247, 248–300, 302–353, 354–411, and 412–461; these read ADRV…LSSK, VTKV…VLTD, EGVF…FLTD, KGEV…AVSA, GGLF…VLNG, EGHV…ALTN, and KGEL…TLAK.

In terms of assembly, forms a regulatory protein-RNA complex, consisting of RCC1L, NGRN, RPUSD3, RPUSD4, TRUB2, FASTKD2 and 16S mt-rRNA. Interacts with 16S mt-rRNA; this interaction is direct. Interacts with OPA1; this interaction is direct. Asociates with the mitochondrial ribosome large subunit (mt-LSU). As to quaternary structure, asociates with the mitochondrial ribosome small subunit (mt-SSU). As to expression, ubiquitous.

The protein resides in the mitochondrion membrane. Its subcellular location is the mitochondrion inner membrane. Functionally, guanine nucleotide exchange factor (GEF) for mitochondrial dynamin-related GTPase OPA1. Activates OPA1, by exchanging bound GDP for free GTP, and drives OPA1 and MFN1-dependent mitochondrial fusion. Plays an essential role in mitochondrial ribosome biogenesis. As a component of a functional protein-RNA module, consisting of RCC1L, NGRN, RPUSD3, RPUSD4, TRUB2, FASTKD2 and 16S mitochondrial ribosomal RNA (16S mt-rRNA), controls 16S mt-rRNA abundance and is required for intra-mitochondrial translation of core subunits of the oxidative phosphorylation system. Plays an essential role in mitochondrial ribosome biogenesis via its association with GTPases that play a role in the assembly of the large ribosome subunit. In terms of biological role, plays an essential role in mitochondrial ribosome biogenesis via its association with GTPases that play a role in the assembly of the small ribosome subunit. In Homo sapiens (Human), this protein is RCC1-like G exchanging factor-like protein.